The primary structure comprises 310 residues: UDP-N-acetylenolpyruvoylglucosamine reductase (310 aa).

The FAD-binding PCMH-type domain maps to 35-199 (VGGPAQALFT…TSARFRGTPA (165 aa)). Residue Arg-179 is part of the active site. Catalysis depends on Ser-228, which acts as the Proton donor. Residue Glu-298 is part of the active site.

It belongs to the MurB family. FAD is required as a cofactor.

The protein resides in the cytoplasm. The enzyme catalyses UDP-N-acetyl-alpha-D-muramate + NADP(+) = UDP-N-acetyl-3-O-(1-carboxyvinyl)-alpha-D-glucosamine + NADPH + H(+). Its pathway is cell wall biogenesis; peptidoglycan biosynthesis. Functionally, cell wall formation. The polypeptide is UDP-N-acetylenolpyruvoylglucosamine reductase (Rhodopseudomonas palustris (strain BisB5)).